The primary structure comprises 1576 residues: DExH-box ATP-dependent RNA helicase DExH2 (1576 aa).

One can recognise an R3H domain in the interval 15-78 (EATGAWATKV…ERRLSLFKGD (64 aa)). In terms of domain architecture, Helicase ATP-binding spans 227–396 (ISAVESNQVV…FGGCPVVRVP (170 aa)). Residue 240-247 (GETGCGKT) coordinates ATP. The DEIH box signature appears at 343–346 (DEIH). A Helicase C-terminal domain is found at 561 to 735 (LIVKLMKKIC…ELCLQVKMLD (175 aa)). Disordered regions lie at residues 1137-1165 (ATSP…MGSK), 1177-1223 (MEES…SLNN), and 1260-1576 (DMGN…PSDQ). Positions 1281–1301 (PNSANSMDLGNMEENTPSDLA) are enriched in polar residues. Basic and acidic residues predominate over residues 1305–1319 (KKKEPKSVSKLDLGS). Residues 1349-1360 (KQPEKKRSRSKK) carry the PH1 motif. Positions 1352-1363 (EKKRSRSKKRKS) are enriched in basic residues. Over residues 1381-1412 (ANENEQTEPKSANNLDLGNMKENTPSDLANEN) the composition is skewed to polar residues. A PH2 motif is present at residues 1454 to 1465 (KQPKKKRSRSKK). Over residues 1455 to 1467 (QPKKKRSRSKKCK) the composition is skewed to basic residues. Residues 1490 to 1508 (EQKDPESVNRLDPGKEKES) show a composition bias toward basic and acidic residues. Residues 1509-1524 (IPSNLVSGNEQPDSNT) show a composition bias toward polar residues. Over residues 1528–1537 (KKPKKKKRKL) the composition is skewed to basic residues. The Nuclear localization signal signature appears at 1530–1537 (PKKKKRKL). Residues 1540–1562 (NFDSVNNMEEKMPSTNVLSQGNK) show a composition bias toward polar residues.

This sequence belongs to the DExH box helicase family. In terms of assembly, homodimer.

Its subcellular location is the nucleus. It carries out the reaction ATP + H2O = ADP + phosphate + H(+). Functionally, may function as an ATP-dependent RNA/DNA helicase. Binds DNA in vitro in a non-specific manner. This chain is DExH-box ATP-dependent RNA helicase DExH2, found in Arabidopsis thaliana (Mouse-ear cress).